The following is a 180-amino-acid chain: MLVVGRIGKPHGIRGEVTVEVRTDEPETRFAPGSVLRTEPGANVPASPGAYRVPSELTVETARWHQGRLLLVAFEGVLDRNVAEALRGTFVGVDRADVTAPTDPEEFHDHQLVGLAVVTSAGERLGEIVRIDHAPAADLLVLRRPGDRDVLIPFVRAIVPEVDLAGGRVVVDPPGGLLDL.

One can recognise a PRC barrel domain in the interval 104–177; it reads PEEFHDHQLV…RVVVDPPGGL (74 aa).

Belongs to the RimM family. As to quaternary structure, binds ribosomal protein uS19.

Its subcellular location is the cytoplasm. Its function is as follows. An accessory protein needed during the final step in the assembly of 30S ribosomal subunit, possibly for assembly of the head region. Essential for efficient processing of 16S rRNA. May be needed both before and after RbfA during the maturation of 16S rRNA. It has affinity for free ribosomal 30S subunits but not for 70S ribosomes. This Salinispora arenicola (strain CNS-205) protein is Ribosome maturation factor RimM.